Consider the following 441-residue polypeptide: MSNVTHQPKIGFVSLGCPKNLVDSERILTELRTEGYDVVPTYDNADMVIVNTCGFIDSAVQESLEAIGEALKENGKVIVTGCLGAKEDQIREVHPKVLEITGPHSYEQVLEHVHHYSPKPKHNPFLSLVPEQGVKLTPRHYAYLKISEGCNHRCTFCIIPSMRGDLVSRPIGEVLAEAKRLADAGVKELLVISQDTSAYGVDVKHRTGFHNGMPVKTSMVSLCEELAKLGIWVRLHYVYPYPHVDDVIPLMAEGKILPYLDIPLQHASPRILKLMKRPGSADRQLARIKQWREICPDLTLRSTFIVGFPGETEEDFQMLLDFLKEARLDRVGCFKYSPVEGATANELADQVPEEVKEERWNRFMQLQQQISAERLQEKVGREILVLVDEVDEEGAIGRSMADAPEIDGAVYLNGETRVKPGDVVRVKVEHADEYDLWGTRV.

One can recognise an MTTase N-terminal domain in the interval 8 to 118 (PKIGFVSLGC…VLEHVHHYSP (111 aa)). Residues Cys17, Cys53, Cys82, Cys150, Cys154, and Cys157 each coordinate [4Fe-4S] cluster. The Radical SAM core domain occupies 136–373 (LTPRHYAYLK…MQLQQQISAE (238 aa)). The TRAM domain occupies 376-441 (QEKVGREILV…DEYDLWGTRV (66 aa)).

It belongs to the methylthiotransferase family. RimO subfamily. It depends on [4Fe-4S] cluster as a cofactor.

The protein localises to the cytoplasm. The enzyme catalyses L-aspartate(89)-[ribosomal protein uS12]-hydrogen + (sulfur carrier)-SH + AH2 + 2 S-adenosyl-L-methionine = 3-methylsulfanyl-L-aspartate(89)-[ribosomal protein uS12]-hydrogen + (sulfur carrier)-H + 5'-deoxyadenosine + L-methionine + A + S-adenosyl-L-homocysteine + 2 H(+). Functionally, catalyzes the methylthiolation of an aspartic acid residue of ribosomal protein uS12. This chain is Ribosomal protein uS12 methylthiotransferase RimO, found in Klebsiella pneumoniae (strain 342).